The sequence spans 56 residues: Conotoxin Cal6.41a (56 aa).

A signal peptide spans 1–23 (MSGSGAMLLGLLILVAMATSLDT). 3 cysteine pairs are disulfide-bonded: Cys27–Cys41, Cys33–Cys50, and Cys40–Cys54.

In terms of tissue distribution, expressed by the venom duct.

Its subcellular location is the secreted. Functionally, probable neurotoxin. The polypeptide is Conotoxin Cal6.41a (Californiconus californicus (California cone)).